We begin with the raw amino-acid sequence, 481 residues long: Glutamate--tRNA ligase (481 aa).

A 'HIGH' region motif is present at residues 9 to 19 (PSPTGNLHIGT). Positions 247–251 (KLSKR) match the 'KMSKS' region motif. Lys-250 contacts ATP.

This sequence belongs to the class-I aminoacyl-tRNA synthetase family. Glutamate--tRNA ligase type 1 subfamily. Monomer.

The protein resides in the cytoplasm. The catalysed reaction is tRNA(Glu) + L-glutamate + ATP = L-glutamyl-tRNA(Glu) + AMP + diphosphate. In terms of biological role, catalyzes the attachment of glutamate to tRNA(Glu) in a two-step reaction: glutamate is first activated by ATP to form Glu-AMP and then transferred to the acceptor end of tRNA(Glu). This Trichormus variabilis (strain ATCC 29413 / PCC 7937) (Anabaena variabilis) protein is Glutamate--tRNA ligase.